A 313-amino-acid chain; its full sequence is Mitochondrial uncoupling protein 5 (313 aa).

Solcar repeat units follow at residues 4–108 (KGFA…IKGE), 117–208 (MPLM…VKET), and 217–307 (DGLG…VKKL). 6 helical membrane-spanning segments follow: residues 6–26 (FAEG…LDLI), 77–97 (MRAL…YSTT), 123–143 (IGAG…ADVA), 182–202 (RGSS…LASY), 223–243 (VSAS…VDVI), and 280–300 (YKGF…LFVT).

Belongs to the mitochondrial carrier (TC 2.A.29) family. Expressed in roots, leaves, stems and flowers.

It is found in the mitochondrion inner membrane. PUMPS are mitochondrial transporter proteins that create proton leaks across the inner mitochondrial membrane, thus uncoupling oxidative phosphorylation. This leads to a decrease in the efficiency of oxidative phosphorylation and an increase in heat production. May be involved in protecting plant cells against oxidative stress damage. Recombinant PUMP5, reconstituted into liposomes, transports a wide range of dicarboxylic acids including malate, oxaloacetate and succinate as well as phosphate, sulfate and thiosulfate. However, it is unknown if these transports are of any biological significance in vivo. The protein is Mitochondrial uncoupling protein 5 (PUMP5) of Arabidopsis thaliana (Mouse-ear cress).